Consider the following 47-residue polypeptide: Boigatoxin-A (47 aa).

Gln1 carries the pyrrolidone carboxylic acid modification. 2 cysteine pairs are disulfide-bonded: Cys10/Cys34 and Cys13/Cys21.

Monomer. In terms of tissue distribution, expressed by the venom gland.

The protein localises to the secreted. Functionally, this toxin may inhibit nicotinic acetylcholine receptor (nAChR). It has poorly reversible postsynaptic blocking activity in a chick muscle preparation and readily reversible inhibitory activity at a presynaptic site in the rat vas deferens prostatic segment most likely to prevent the release of neurotransmitters. The chain is Boigatoxin-A from Boiga dendrophila (Mangrove snake).